A 102-amino-acid polypeptide reads, in one-letter code: S-phase delaying protein 2 (102 aa).

The segment at 43 to 62 is disordered; it reads FPSYHKDQTDRNELPQQKHD. Positions 46 to 62 are enriched in basic and acidic residues; it reads YHKDQTDRNELPQQKHD.

The protein belongs to the DIF1/spd1 family.

Its subcellular location is the cytoplasm. The protein localises to the nucleus. In terms of biological role, regulates the ribonucleotide reductase activity. In Schizosaccharomyces pombe (strain 972 / ATCC 24843) (Fission yeast), this protein is S-phase delaying protein 2 (spd2).